The following is a 160-amino-acid chain: Transcriptional repressor NrdR (160 aa).

Residues Cys-3–Cys-34 fold into a zinc finger. Residues Leu-49–Asp-139 form the ATP-cone domain.

The protein belongs to the NrdR family. It depends on Zn(2+) as a cofactor.

In terms of biological role, negatively regulates transcription of bacterial ribonucleotide reductase nrd genes and operons by binding to NrdR-boxes. The protein is Transcriptional repressor NrdR of Bartonella tribocorum (strain CIP 105476 / IBS 506).